The following is a 307-amino-acid chain: Serine/threonine-protein phosphatase 4 catalytic subunit (307 aa).

Alanine 2 is subject to N-acetylalanine. 4 residues coordinate Mn(2+): aspartate 54, histidine 56, aspartate 82, and asparagine 114. Histidine 115 acts as the Proton donor in catalysis. Mn(2+) is bound by residues histidine 164 and histidine 238. The residue at position 307 (leucine 307) is a Leucine methyl ester.

This sequence belongs to the PPP phosphatase family. PP-4 (PP-X) subfamily. As to quaternary structure, serine/threonine-protein phosphatase 4 (PP4) occurs in different assemblies of the catalytic and one or more regulatory subunits. Component of the PP4 complexes PPP4C-PPP4R1, PPP4C-PPP4R2, PPP4C-PPP4R2-PPP4R3A, PPP4C-PPP4R2-PPP4R3B and PPP4C-PPP4R4. The PPP4C-PPP4R2 complex appears to be a tetramer composed of 2 molecules of PPP4C and 2 molecules of PPP4R2. Interacts with REL, NFKB1/p50 and RELA. Interacts with SMN1 and GEMIN4. Interacts with IRS4 (phosphorylated). Interacts with SMEK1/PPP4R3A; the interaction requires PP4R2. Interacts with HDAC3. Mn(2+) is required as a cofactor. Methylation at the C-terminal Leu-307 is critical for interactions with regulatory subunits and functions in DNA repair.

It localises to the cytoplasm. The protein resides in the nucleus. Its subcellular location is the cytoskeleton. The protein localises to the microtubule organizing center. It is found in the centrosome. The catalysed reaction is O-phospho-L-seryl-[protein] + H2O = L-seryl-[protein] + phosphate. It catalyses the reaction O-phospho-L-threonyl-[protein] + H2O = L-threonyl-[protein] + phosphate. In terms of biological role, protein phosphatase that is involved in many processes such as microtubule organization at centrosomes, maturation of spliceosomal snRNPs, apoptosis, DNA repair, tumor necrosis factor (TNF)-alpha signaling, activation of c-Jun N-terminal kinase MAPK8, regulation of histone acetylation, DNA damage checkpoint signaling, NF-kappa-B activation and cell migration. The PPP4C-PPP4R1 PP4 complex may play a role in dephosphorylation and regulation of HDAC3. The PPP4C-PPP4R2-PPP4R3A PP4 complex specifically dephosphorylates H2AX phosphorylated on Ser-140 (gamma-H2AX) generated during DNA replication and required for DNA double strand break repair. Dephosphorylates NDEL1 at CDK1 phosphorylation sites and negatively regulates CDK1 activity in interphase. In response to DNA damage, catalyzes RPA2 dephosphorylation, an essential step for DNA repair since it allows the efficient RPA2-mediated recruitment of RAD51 to chromatin. The polypeptide is Serine/threonine-protein phosphatase 4 catalytic subunit (PPP4C) (Homo sapiens (Human)).